Consider the following 672-residue polypeptide: Probable urocanate hydratase (672 aa).

NAD(+) contacts are provided by residues 128–129 (GG), Gln-206, 253–255 (GMS), Glu-273, 318–319 (NV), 340–344 (QTSLH), 351–352 (YY), Tyr-400, and Gly-592.

This sequence belongs to the urocanase family. NAD(+) serves as cofactor.

It catalyses the reaction 4-imidazolone-5-propanoate = trans-urocanate + H2O. The protein operates within amino-acid degradation; L-histidine degradation into L-glutamate; N-formimidoyl-L-glutamate from L-histidine: step 2/3. This is Probable urocanate hydratase (uroc1) from Dictyostelium discoideum (Social amoeba).